A 1017-amino-acid polypeptide reads, in one-letter code: DNA replication licensing factor MCM6 (1017 aa).

2 disordered regions span residues 1 to 94 and 200 to 257; these read MSSP…SFKS and SDSL…TSPE. Positions 24–34 are enriched in low complexity; it reads SIGAGFGSSSG. Polar residues predominate over residues 35-83; the sequence is LDSQIGSRLHFPSSSQPHVSNSQTGPFVNDSTQFSSQRLQTDGSATNDM. The residue at position 78 (Ser78) is a Phosphoserine. The segment covering 209–223 has biased composition (acidic residues); that stretch reads DEGQADEDEQQDDDM. The span at 224-257 shows a compositional bias: polar residues; that stretch reads NGSSLPRDSGSSAAPGNGTSAMATRSITTSTSPE. Phosphoserine is present on residues Ser249 and Ser372. One can recognise an MCM domain in the interval 525-732; sequence IYDKLVRSIA…IDTELASHIV (208 aa). 575–582 serves as a coordination point for ATP; that stretch reads GDPSTSKS. The Arginine finger motif lies at 707–710; the sequence is SRFD. Thr766 is subject to Phosphothreonine. A disordered region spans residues 852–901; that stretch reads IESQSHAASGNNDDNDDGTGSGVITSEPPADIEEGQSEATARPGTSEKKK.

The protein belongs to the MCM family. As to quaternary structure, component of the MCM2-7 complex. The complex forms a toroidal hexameric ring with the proposed subunit order MCM2-MCM6-MCM4-MCM7-MCM3-MCM5; loaded onto DNA, forms a head-head double hexamer. Interacts with MCM10.

The protein resides in the nucleus. It catalyses the reaction ATP + H2O = ADP + phosphate + H(+). In terms of biological role, acts as a component of the MCM2-7 complex (MCM complex) which is the putative replicative helicase essential for 'once per cell cycle' DNA replication initiation and elongation in eukaryotic cells. The active ATPase sites in the MCM2-7 ring are formed through the interaction surfaces of two neighboring subunits such that a critical structure of a conserved arginine finger motif is provided in trans relative to the ATP-binding site of the Walker A box of the adjacent subunit. The six ATPase active sites, however, are likely to contribute differentially to the complex helicase activity. Once loaded onto DNA, double hexamers can slide on dsDNA in the absence of ATPase activity. Required for the entry in S phase and for cell division. This Saccharomyces cerevisiae (strain ATCC 204508 / S288c) (Baker's yeast) protein is DNA replication licensing factor MCM6 (MCM6).